A 362-amino-acid chain; its full sequence is Type II methyltransferase M.MamI (362 aa).

It belongs to the N(4)/N(6)-methyltransferase family.

The enzyme catalyses a 2'-deoxyadenosine in DNA + S-adenosyl-L-methionine = an N(6)-methyl-2'-deoxyadenosine in DNA + S-adenosyl-L-homocysteine + H(+). In terms of biological role, a gamma subtype methylase that recognizes the double-stranded sequence 5'-GATNNNNATC-3', methylates A-? on both strands, and protects the DNA from cleavage by the MamI endonuclease. This is Type II methyltransferase M.MamI from Microbacterium ammoniaphilum.